Consider the following 297-residue polypeptide: CCAAT/enhancer-binding protein beta (297 aa).

Positions 1–22 (MHRLLAWDAACLPPPPAAFRPM) are required for Lys-134 sumoylation. Position 3 is an asymmetric dimethylarginine; by CARM1 (R3). The tract at residues 22–105 (MEVANFYYEP…YGAKPSKKPS (84 aa)) is required for MYC transcriptional repression. The residue at position 39 (K39) is an N6-acetyllysine; alternate. Position 39 is an N6-methylated lysine; alternate (K39). 2 positions are modified to N6-acetyllysine; by KAT2A and KAT2B: K99 and K102. The residue at position 103 (K103) is an N6-acetyllysine; by KAT2A and KAT2B; alternate. K103 participates in a covalent cross-link: Glycyl lysine isopeptide (Lys-Gly) (interchain with G-Cter in SUMO2); alternate. Position 105 is a phosphoserine; by RPS6KA1 and PKC/PRKCA (S105). K134 participates in a covalent cross-link: Glycyl lysine isopeptide (Lys-Gly) (interchain with G-Cter in SUMO2); alternate. A Glycyl lysine isopeptide (Lys-Gly) (interchain with G-Cter in SUMO); alternate cross-link involves residue K134. A Glycyl lysine isopeptide (Lys-Gly) (interchain with G-Cter in SUMO2) cross-link involves residue K145. Positions 172–201 (SGSSGSLSTSSSSSPPGTPSPADAKAAPAA) are disordered. Position 180 is a phosphothreonine; by GSK3-beta (T180). 2 O-linked (GlcNAc) serine glycosylation sites follow: S181 and S182. A Phosphoserine; by GSK3-beta modification is found at S185. T189 is modified (phosphothreonine; by RPS6KA1, CDK2 and MAPK). Residues K212 and K214 each participate in a glycyl lysine isopeptide (Lys-Gly) (interchain with G-Cter in SUMO2) cross-link. One can recognise a bZIP domain in the interval 223–286 (SDEYKMRRER…STLRNLFKQL (64 aa)). A basic motif region spans residues 227 to 247 (KMRRERNNIAVRKSRDKAKMR). S240 carries the phosphoserine; by PKC/PRKCA modification. A leucine-zipper region spans residues 249–256 (LETQHKVL). At S277 the chain carries Phosphoserine; by CaMK2. A Glycyl lysine isopeptide (Lys-Gly) (interchain with G-Cter in SUMO2) cross-link involves residue K284.

Belongs to the bZIP family. C/EBP subfamily. Binds DNA as a homodimer and as a heterodimer. Interacts with MYB; within the complex, MYB and CEBPB bind to different promoter regions. Interacts with ATF4. Binds DNA as a heterodimer with ATF4. Can form stable heterodimers with CEBPA, CEBPD, CEBPE and CEBPG. Interacts with SIX1. Isoform 2 and isoform 3 also form heterodimers. Interacts with TRIM28 and PTGES2. Interacts with PRDM16. Interacts with CCDC85B. Forms a complex with THOC5. Interacts with ZNF638; this interaction increases transcriptional activation. Interacts with CIDEA and CIDEC; these interactions increase transcriptional activation of a subset of CEBPB downstream target genes. Interacts with DDIT3/CHOP. Interacts with EP300; recruits EP300 to chromatin. Interacts with RORA; the interaction disrupts interaction with EP300. Interacts (not methylated) with MED23, MED26, SMARCA2, SMARCB1 and SMARCC1. Interacts with KAT2A and KAT2B. Interacts with ATF5; EP300 is required for ATF5 and CEBPB interaction and DNA binding. Interacts with NFE2L1; the heterodimer represses expression of DSPP during odontoblast differentiation. In terms of processing, phosphorylated at Thr-189 by MAPK and CDK2, serves to prime phosphorylation at Thr-180 and Ser-185 by GSK3B and acquire DNA-binding as well as transactivation activities, required to induce adipogenesis. MAPK and CDK2 act sequentially to maintain Thr-189 in the primed phosphorylated state during mitotical cloning expansion and thereby progression of terminal differentiation. Phosphorylation at Ser-105 enhances transactivation activity. Phosphorylation at Ser-277 in response to calcium increases transactivation activity. Phosphorylated at Thr-189 by RPS6KA1. Methylated. Methylation at Arg-3 by CARM1 and at Lys-39 by EHMT2 inhibit transactivation activity. Methylation is probably inhibited by phosphorylation at Thr-189. Post-translationally, sumoylated by polymeric chains of SUMO2 or SUMO3. Sumoylation at Lys-134 is required for inhibition of T-cells proliferation. In adipocytes, sumoylation at Lys-134 by PIAS1 leads to ubiquitination and subsequent proteasomal degradation. Desumoylated by SENP2, which abolishes ubiquitination and stabilizes protein levels. In terms of processing, ubiquitinated, leading to proteasomal degradation. O-glycosylated, glycosylation at Ser-181 and Ser-182 prevents phosphorylation on Thr-189, Ser-185 and Thr-180 and DNA binding activity which delays the adipocyte differentiation program. Post-translationally, acetylated. Acetylation at Lys-39 is an important and dynamic regulatory event that contributes to its ability to transactivate target genes, including those associated with adipogenesis and adipocyte function. Deacetylation by HDAC1 represses its transactivation activity. Acetylated by KAT2A and KAT2B within a cluster of lysine residues between amino acids 99-103, this acetylation is strongly induced by glucocorticoid treatment and enhances transactivation activity. As to expression, liver and lung.

It localises to the nucleus. The protein localises to the cytoplasm. Functionally, important transcription factor regulating the expression of genes involved in immune and inflammatory responses. Also plays a significant role in adipogenesis, as well as in the gluconeogenic pathway, liver regeneration, and hematopoiesis. The consensus recognition site is 5'-T[TG]NNGNAA[TG]-3'. Its functional capacity is governed by protein interactions and post-translational protein modifications. During early embryogenesis, plays essential and redundant roles with CEBPA. Has a promitotic effect on many cell types such as hepatocytes and adipocytes but has an antiproliferative effect on T-cells by repressing MYC expression, facilitating differentiation along the T-helper 2 lineage. Binds to regulatory regions of several acute-phase and cytokines genes and plays a role in the regulation of acute-phase reaction and inflammation. Also plays a role in intracellular bacteria killing. During adipogenesis, is rapidly expressed and, after activation by phosphorylation, induces CEBPA and PPARG, which turn on the series of adipocyte genes that give rise to the adipocyte phenotype. The delayed transactivation of the CEBPA and PPARG genes by CEBPB appears necessary to allow mitotic clonal expansion and thereby progression of terminal differentiation. Essential for female reproduction because of a critical role in ovarian follicle development. Restricts osteoclastogenesis: together with NFE2L1; represses expression of DSPP during odontoblast differentiation. Its function is as follows. Essential for gene expression induction in activated macrophages. Plays a major role in immune responses such as CD4(+) T-cell response, granuloma formation and endotoxin shock. Not essential for intracellular bacteria killing. In terms of biological role, acts as a dominant negative through heterodimerization with isoform 2. Promotes osteoblast differentiation and osteoclastogenesis. The polypeptide is CCAAT/enhancer-binding protein beta (Rattus norvegicus (Rat)).